The chain runs to 444 residues: Tubulin beta chain (444 aa).

Positions 11, 69, 138, 142, 143, 144, 204, and 226 each coordinate GTP. Glutamate 69 is a Mg(2+) binding site. The interval glutamine 423–valine 444 is disordered. Over residues threonine 429–valine 444 the composition is skewed to acidic residues.

The protein belongs to the tubulin family. As to quaternary structure, dimer of alpha and beta chains. A typical microtubule is a hollow water-filled tube with an outer diameter of 25 nm and an inner diameter of 15 nM. Alpha-beta heterodimers associate head-to-tail to form protofilaments running lengthwise along the microtubule wall with the beta-tubulin subunit facing the microtubule plus end conferring a structural polarity. Microtubules usually have 13 protofilaments but different protofilament numbers can be found in some organisms and specialized cells. Mg(2+) is required as a cofactor.

The protein resides in the cytoplasm. It is found in the cytoskeleton. Its function is as follows. Tubulin is the major constituent of microtubules, a cylinder consisting of laterally associated linear protofilaments composed of alpha- and beta-tubulin heterodimers. Microtubules grow by the addition of GTP-tubulin dimers to the microtubule end, where a stabilizing cap forms. Below the cap, tubulin dimers are in GDP-bound state, owing to GTPase activity of alpha-tubulin. In Euplotes focardii, this protein is Tubulin beta chain.